A 619-amino-acid polypeptide reads, in one-letter code: MAHVKRYRRSSKSSEEGDLDNEDYVPYVPVKERKKQHMIKLGRIVQLVSETAQPKSSSENENEDDSQGAHDVETWGRKYNISLLDQHTELKKIAEAKKLSAVEKQLREEEKIMESIAQQKALMGVAELAKGIQYEQPIKTAWKPPRYIREMSEEEREAVRHELRILVEGETPSPPIRSFREMKFPKGILNGLAAKGIKNPTPIQVQGLPTVLAGRDLIGIAFTGSGKTLVFVLPVIMFALEQEYSLPFERNEGPYGLIICPSRELAKQTHEIIQHYSKHLQACGMPEIRSCLAMGGLPVSEALDVISRGVHIVVATPGRLMDMLDKKILTLDMCRYLCMDEADRMIDMGFEEDVRTIFSFFKGQRQTLLFSATMPKKIQNFARSALVKPVTINVGRAGAASMNVTQQVEYVKQEAKVVYLLDCLQKTAPPVLIFAEKKQDVDCIHEYLLLKGVEAVAIHGGKDQEERSRAVDAYRVGKKDVLVATDVASKGLDFPNVQHVINYDMPDDIENYVHRIGRTGRSNTKGLATTLINKTTEQSVLLDLKHLLIEGKQEVPDFLDELAPETEHQHLDLGDSHGCTYCGGLGHRITECPKLEAVQNKQASNIGRRDYLSNTAADY.

Residues 1–11 (MAHVKRYRRSS) are compositionally biased toward basic residues. Disordered regions lie at residues 1–25 (MAHVKRYRRSSKSSEEGDLDNEDYV) and 50–69 (ETAQPKSSSENENEDDSQGA). Phosphoserine occurs at positions 11, 13, 14, 56, 57, 58, and 66. The Q motif motif lies at 177–205 (RSFREMKFPKGILNGLAAKGIKNPTPIQV). Residues 208-392 (LPTVLAGRDL…RSALVKPVTI (185 aa)) enclose the Helicase ATP-binding domain. 221 to 228 (AFTGSGKT) lines the ATP pocket. Residues 340–343 (DEAD) carry the DEAD box motif. One can recognise a Helicase C-terminal domain in the interval 403 to 563 (NVTQQVEYVK…EVPDFLDELA (161 aa)). A CCHC-type zinc finger spans residues 577-594 (HGCTYCGGLGHRITECPK).

The protein belongs to the DEAD box helicase family. DDX41 subfamily.

The protein resides in the nucleus. It carries out the reaction ATP + H2O = ADP + phosphate + H(+). ATP-dependent RNA helicase. Is essential for the directed and fasciculated early outgrowth of the bolwig nerves, as well as for its navigation at later stages. Is required during post-transcriptional gene expression. Plays a role during morphogenetic process, apoptosis and the establishment of cell polarity. The sequence is that of ATP-dependent RNA helicase abstrakt (abs) from Drosophila melanogaster (Fruit fly).